Consider the following 460-residue polypeptide: Centrosomal protein CEP57L1 (460 aa).

The residue at position 49 (serine 49) is a Phosphoserine. 2 coiled-coil regions span residues 51 to 228 (NSQA…EISK) and 317 to 384 (ISIC…LKKH). Residues 399 to 410 (KMSEASGIQQED) are compositionally biased toward polar residues. Positions 399–423 (KMSEASGIQQEDSYPKGSKNIKNSP) are disordered.

The protein belongs to the translokin family.

It is found in the cytoplasm. The protein localises to the cytoskeleton. The protein resides in the microtubule organizing center. It localises to the centrosome. Centrosomal protein which may be required for microtubule attachment to centrosomes. The protein is Centrosomal protein CEP57L1 (CEP57L1) of Homo sapiens (Human).